The following is a 321-amino-acid chain: Protein ZAR1-like (321 aa).

The tract at residues 110–214 (RTLSSCSPWD…GDAASEPLRR (105 aa)) is disordered. Over residues 145-154 (LRRDGDEAES) the composition is skewed to basic and acidic residues. The segment at 222–307 (PKYGYFHCKD…QELCGRCKDK (86 aa)) adopts a 3CxxC-type zinc-finger fold.

Belongs to the ZAR1 family. In terms of assembly, interacts with YBX2.

It is found in the cytoplasm. The protein resides in the cytoplasmic ribonucleoprotein granule. In terms of biological role, mRNA-binding protein required for maternal mRNA storage, translation and degradation during oocyte maturation. Probably promotes formation of some phase-separated membraneless compartment that stores maternal mRNAs in oocytes: acts by undergoing liquid-liquid phase separation upon binding to maternal mRNAs. Binds to the 3'-UTR of maternal mRNAs, inhibiting their translation. The protein is Protein ZAR1-like of Homo sapiens (Human).